A 348-amino-acid polypeptide reads, in one-letter code: Ferrochelatase (348 aa).

2 residues coordinate Fe cation: His-218 and Glu-299.

It belongs to the ferrochelatase family.

Its subcellular location is the cytoplasm. It carries out the reaction heme b + 2 H(+) = protoporphyrin IX + Fe(2+). The protein operates within porphyrin-containing compound metabolism; protoheme biosynthesis; protoheme from protoporphyrin-IX: step 1/1. Functionally, catalyzes the ferrous insertion into protoporphyrin IX. This Methylocella silvestris (strain DSM 15510 / CIP 108128 / LMG 27833 / NCIMB 13906 / BL2) protein is Ferrochelatase.